The primary structure comprises 512 residues: GMP synthase [glutamine-hydrolyzing] (512 aa).

One can recognise a Glutamine amidotransferase type-1 domain in the interval 5-195 (GIVILDFGSQ…IFGIAKAEKN (191 aa)). Residue Cys-82 is the Nucleophile of the active site. Active-site residues include His-169 and Glu-171. A GMPS ATP-PPase domain is found at 196–387 (WSMENYIEST…LGIPDYMVDR (192 aa)). 223–229 (SGGVDSS) serves as a coordination point for ATP.

Homodimer.

It carries out the reaction XMP + L-glutamine + ATP + H2O = GMP + L-glutamate + AMP + diphosphate + 2 H(+). The protein operates within purine metabolism; GMP biosynthesis; GMP from XMP (L-Gln route): step 1/1. In terms of biological role, catalyzes the synthesis of GMP from XMP. This chain is GMP synthase [glutamine-hydrolyzing], found in Fusobacterium nucleatum subsp. nucleatum (strain ATCC 25586 / DSM 15643 / BCRC 10681 / CIP 101130 / JCM 8532 / KCTC 2640 / LMG 13131 / VPI 4355).